The following is a 429-amino-acid chain: Adenylosuccinate synthetase (429 aa).

GTP-binding positions include 12–18 and 40–42; these read GDEGKGK and GHT. D13 acts as the Proton acceptor in catalysis. Mg(2+)-binding residues include D13 and G40. Residues 13-16, 38-41, T129, R143, Q223, T238, and R302 each bind IMP; these read DEGK and NAGH. H41 acts as the Proton donor in catalysis. Residue 298–304 participates in substrate binding; sequence VVTGRKR. GTP is bound by residues R304, 330-332, and 412-414; these read KLD and STS.

Belongs to the adenylosuccinate synthetase family. In terms of assembly, homodimer. Mg(2+) is required as a cofactor.

Its subcellular location is the cytoplasm. It carries out the reaction IMP + L-aspartate + GTP = N(6)-(1,2-dicarboxyethyl)-AMP + GDP + phosphate + 2 H(+). It participates in purine metabolism; AMP biosynthesis via de novo pathway; AMP from IMP: step 1/2. In terms of biological role, plays an important role in the de novo pathway of purine nucleotide biosynthesis. Catalyzes the first committed step in the biosynthesis of AMP from IMP. The chain is Adenylosuccinate synthetase from Maricaulis maris (strain MCS10) (Caulobacter maris).